We begin with the raw amino-acid sequence, 511 residues long: Exodeoxyribonuclease 7 large subunit (511 aa).

The protein belongs to the XseA family. Heterooligomer composed of large and small subunits.

It is found in the cytoplasm. The enzyme catalyses Exonucleolytic cleavage in either 5'- to 3'- or 3'- to 5'-direction to yield nucleoside 5'-phosphates.. Functionally, bidirectionally degrades single-stranded DNA into large acid-insoluble oligonucleotides, which are then degraded further into small acid-soluble oligonucleotides. This chain is Exodeoxyribonuclease 7 large subunit, found in Brucella suis (strain ATCC 23445 / NCTC 10510).